A 483-amino-acid polypeptide reads, in one-letter code: Probable ATP-dependent RNA helicase DDX6 (483 aa).

The interval 1–40 is disordered; the sequence is MSTARTENPVIMGLSSQNGQLRGPVKPTGGPGGGGTQTQQ. The residue at position 36 (Thr-36) is a Phosphothreonine. The Q motif signature appears at 96–124; that stretch reads NEFEDYCLKRELLMGIFEMGWEKPSPIQE. The region spanning 127 to 298 is the Helicase ATP-binding domain; the sequence is IPIALSGRDI…NSHLQKPYEI (172 aa). An ATP-binding site is contributed by 140 to 147; sequence AKNGTGKS. The short motif at 246 to 249 is the DEAD box element; sequence DEAD. Residues 308–468 enclose the Helicase C-terminal domain; the sequence is GVTQYYAYVT…PIPSNIDKSL (161 aa).

This sequence belongs to the DEAD box helicase family. DDX6/DHH1 subfamily. In terms of assembly, interacts with LSM14A, LSM14B, EIF4ENIF1/4E-T, PATL1, EDC3 and EDC4. Forms a complex with DCP1A, DCP2, EDC3 and EDC4/HEDLS. Interacts with LIMD1, WTIP and AJUBA. Interacts with APOBEC3G in an RNA-dependent manner. Interacts with RC3H1. Interacts with ATXN2L. Interacts with MCRIP1. Interacts with MCRIP2. Interacts with NUFIP2. Interacts with TRIM71 (via NHL repeats) in an RNA-dependent manner. Sumoylated.

Its subcellular location is the cytoplasm. It is found in the P-body. The protein resides in the nucleus. It localises to the cytoplasmic ribonucleoprotein granule. It carries out the reaction ATP + H2O = ADP + phosphate + H(+). Its function is as follows. Essential for the formation of P-bodies, cytosolic membrane-less ribonucleoprotein granules involved in RNA metabolism through the coordinated storage of mRNAs encoding regulatory functions. Plays a role in P-bodies to coordinate the storage of translationally inactive mRNAs in the cytoplasm and prevent their degradation. In the process of mRNA degradation, plays a role in mRNA decapping. Blocks autophagy in nutrient-rich conditions by repressing the expression of ATG-related genes through degradation of their transcripts. The protein is Probable ATP-dependent RNA helicase DDX6 (DDX6) of Pongo abelii (Sumatran orangutan).